The following is an 872-amino-acid chain: Oxidation resistance protein 1 (872 aa).

The segment at 1-86 (MSVTNLSWLK…QKKTLDKKDG (86 aa)) is disordered. The span at 63–86 (RRSELKRFYTIDTGQKKTLDKKDG) shows a compositional bias: basic and acidic residues. Ser-90 carries the phosphoserine modification. The LysM domain maps to 98 to 141 (VKYTVESRDSLNSIALKFDTTPNELVQLNKLFSRAVVTGQVLYV). Thr-118 is subject to Phosphothreonine. Low complexity predominate over residues 150–168 (VESSPSLSPISPLSPTSSE). The tract at residues 150–187 (VESSPSLSPISPLSPTSSEAELEKTTTPDVVHPKEPTP) is disordered. Over residues 170–184 (ELEKTTTPDVVHPKE) the composition is skewed to basic and acidic residues. 3 positions are modified to phosphoserine: Ser-201, Ser-202, and Ser-204. In terms of domain architecture, GRAM spans 212–268 (EKFLKINCRYITSSKGTVSGVLLVTPNNIMFDPHKTDPLVQENGCEEYGIMCPMEEV). A phosphoserine mark is found at Ser-294, Ser-334, and Ser-336. The segment at 314 to 338 (SRIRDAANDSASTAPRSTEESLSED) is disordered. At Thr-341 the chain carries Phosphothreonine. 2 positions are modified to phosphoserine: Ser-346 and Ser-496. The interval 549–576 (RRHRLHKFLCLRVRKPMRKTFVSQASAT) is mediates oxidative antimutator activity. The region spanning 711–872 (HLLLPDQIIK…IQDIEIWAFK (162 aa)) is the TLDc domain.

This sequence belongs to the OXR1 family.

It localises to the mitochondrion. Its function is as follows. May be involved in protection from oxidative damage. In Bos taurus (Bovine), this protein is Oxidation resistance protein 1 (OXR1).